The sequence spans 672 residues: Peptidoglycan D,D-transpeptidase MrdA (672 aa).

The chain crosses the membrane as a helical span at residues 21-41 (IFFAVGLVIICLLVLASRYAY). Residue serine 326 is the Acyl-ester intermediate of the active site. 4 residues coordinate Zn(2+): aspartate 350, aspartate 365, histidine 371, and cysteine 384. Residues 616-672 (ANHQVNGGLMTAGIKPGELPSGNESASSTPATSAPTSAAASTPQATPTRPATNEVDE) are disordered. Over residues 640 to 672 (SASSTPATSAPTSAAASTPQATPTRPATNEVDE) the composition is skewed to low complexity.

It belongs to the transpeptidase family. MrdA subfamily. In terms of assembly, monomer. The cofactor is Zn(2+).

It is found in the cell inner membrane. The enzyme catalyses Preferential cleavage: (Ac)2-L-Lys-D-Ala-|-D-Ala. Also transpeptidation of peptidyl-alanyl moieties that are N-acyl substituents of D-alanine.. Its pathway is cell wall biogenesis; peptidoglycan biosynthesis. With respect to regulation, inhibited by the beta-lactams sulbactam and piperacillin-tazobactam. Functionally, catalyzes cross-linking of the peptidoglycan cell wall. Involved in the determination of the rod shape of the cell. In Acinetobacter baumannii (strain ATCC 19606 / DSM 30007 / JCM 6841 / CCUG 19606 / CIP 70.34 / NBRC 109757 / NCIMB 12457 / NCTC 12156 / 81), this protein is Peptidoglycan D,D-transpeptidase MrdA.